Reading from the N-terminus, the 320-residue chain is Cytochrome f (320 aa).

The N-terminal stretch at Met-1–Ala-35 is a signal peptide. Heme contacts are provided by Tyr-36, Cys-56, Cys-59, and His-60. Residues Val-286–Lys-306 traverse the membrane as a helical segment.

This sequence belongs to the cytochrome f family. In terms of assembly, the 4 large subunits of the cytochrome b6-f complex are cytochrome b6, subunit IV (17 kDa polypeptide, petD), cytochrome f and the Rieske protein, while the 4 small subunits are PetG, PetL, PetM and PetN. The complex functions as a dimer. Heme serves as cofactor.

Its subcellular location is the plastid. The protein resides in the chloroplast thylakoid membrane. Component of the cytochrome b6-f complex, which mediates electron transfer between photosystem II (PSII) and photosystem I (PSI), cyclic electron flow around PSI, and state transitions. This Drimys granadensis protein is Cytochrome f.